The primary structure comprises 498 residues: Glycerol kinase (498 aa).

Threonine 11 is an ADP binding site. ATP contacts are provided by threonine 11, threonine 12, and serine 13. Threonine 11 contacts sn-glycerol 3-phosphate. Position 15 (arginine 15) interacts with ADP. 4 residues coordinate sn-glycerol 3-phosphate: arginine 81, glutamate 82, tyrosine 133, and aspartate 242. Residues arginine 81, glutamate 82, tyrosine 133, aspartate 242, and glutamine 243 each coordinate glycerol. Threonine 264 and glycine 307 together coordinate ADP. 4 residues coordinate ATP: threonine 264, glycine 307, glutamine 311, and glycine 411. Glycine 411 lines the ADP pocket.

The protein belongs to the FGGY kinase family.

The enzyme catalyses glycerol + ATP = sn-glycerol 3-phosphate + ADP + H(+). It functions in the pathway polyol metabolism; glycerol degradation via glycerol kinase pathway; sn-glycerol 3-phosphate from glycerol: step 1/1. Its activity is regulated as follows. Inhibited by fructose 1,6-bisphosphate (FBP). In terms of biological role, key enzyme in the regulation of glycerol uptake and metabolism. Catalyzes the phosphorylation of glycerol to yield sn-glycerol 3-phosphate. The sequence is that of Glycerol kinase from Afipia carboxidovorans (strain ATCC 49405 / DSM 1227 / KCTC 32145 / OM5) (Oligotropha carboxidovorans).